The chain runs to 156 residues: Small ribosomal subunit protein uS7 (156 aa).

Belongs to the universal ribosomal protein uS7 family. Part of the 30S ribosomal subunit. Contacts proteins S9 and S11.

In terms of biological role, one of the primary rRNA binding proteins, it binds directly to 16S rRNA where it nucleates assembly of the head domain of the 30S subunit. Is located at the subunit interface close to the decoding center, probably blocks exit of the E-site tRNA. The chain is Small ribosomal subunit protein uS7 from Synechococcus sp. (strain JA-2-3B'a(2-13)) (Cyanobacteria bacterium Yellowstone B-Prime).